We begin with the raw amino-acid sequence, 126 residues long: Fluoride-specific ion channel FluC (126 aa).

Helical transmembrane passes span 4-24, 36-56, 67-85, and 101-121; these read LLLV…TSAW, GTLL…TASL, LFLA…SFNY, and AYLL…TLLV. Positions 75 and 78 each coordinate Na(+).

This sequence belongs to the fluoride channel Fluc/FEX (TC 1.A.43) family.

The protein localises to the cell inner membrane. It carries out the reaction fluoride(in) = fluoride(out). Its activity is regulated as follows. Na(+) is not transported, but it plays an essential structural role and its presence is essential for fluoride channel function. Fluoride-specific ion channel. Important for reducing fluoride concentration in the cell, thus reducing its toxicity. The sequence is that of Fluoride-specific ion channel FluC from Anaeromyxobacter sp. (strain K).